The following is a 127-amino-acid chain: UPF0738 protein Bsph_1225 (127 aa).

Belongs to the UPF0738 family.

The chain is UPF0738 protein Bsph_1225 from Lysinibacillus sphaericus (strain C3-41).